The following is a 117-amino-acid chain: Small ribosomal subunit protein bS6 (117 aa).

A disordered region spans residues 96-117 (HAEGPSVQMQKRDERDSRRERR). Basic and acidic residues predominate over residues 105-117 (QKRDERDSRRERR).

The protein belongs to the bacterial ribosomal protein bS6 family.

In terms of biological role, binds together with bS18 to 16S ribosomal RNA. The protein is Small ribosomal subunit protein bS6 of Ruegeria pomeroyi (strain ATCC 700808 / DSM 15171 / DSS-3) (Silicibacter pomeroyi).